A 2379-amino-acid chain; its full sequence is Serine/threonine-protein kinase MEC1 (2379 aa).

Residues 1410–1955 enclose the FAT domain; that stretch reads LLANKSLETN…LWHISVLCQS (546 aa). One can recognise a PI3K/PI4K catalytic domain in the interval 2060-2363; the sequence is FASSYKIFSS…QAETLIQEAT (304 aa). The segment at 2066–2072 is G-loop; the sequence is IFSSLKK. Residues 2232–2240 are catalytic loop; sequence GLGDRHCEN. Residues 2252–2276 form an activation loop region; sequence HVDFDCLFEKGENLPVPEIVPFRLT. The FATC domain occupies 2347–2379; it reads LLLSVSGQAETLIQEATSTENLSKMYIGWLPFW.

It belongs to the PI3/PI4-kinase family. ATM subfamily.

The protein resides in the nucleus. The catalysed reaction is L-seryl-[protein] + ATP = O-phospho-L-seryl-[protein] + ADP + H(+). The enzyme catalyses L-threonyl-[protein] + ATP = O-phospho-L-threonyl-[protein] + ADP + H(+). In terms of biological role, serine/threonine protein kinase which activates checkpoint signaling upon genotoxic stresses such as ionizing radiation (IR), ultraviolet light (UV), or DNA replication stalling, thereby acting as a DNA damage sensor. Recognizes the substrate consensus sequence [ST]-Q. Recruited to DNA lesions in order to initiate the DNA repair by homologous recombination. Phosphorylates histone H2A to form H2AS128ph (gamma-H2A) at sites of DNA damage, also involved in the regulation of DNA damage response mechanism. Required for cell growth and meiotic recombination. The protein is Serine/threonine-protein kinase MEC1 (MEC1) of Candida glabrata (strain ATCC 2001 / BCRC 20586 / JCM 3761 / NBRC 0622 / NRRL Y-65 / CBS 138) (Yeast).